A 247-amino-acid polypeptide reads, in one-letter code: 6-carboxyhexanoate--CoA ligase (247 aa).

This sequence belongs to the BioW family. Homodimer. Requires Mg(2+) as cofactor.

The enzyme catalyses heptanedioate + ATP + CoA = 6-carboxyhexanoyl-CoA + AMP + diphosphate. The protein operates within metabolic intermediate metabolism; pimeloyl-CoA biosynthesis; pimeloyl-CoA from pimelate: step 1/1. Its function is as follows. Catalyzes the transformation of pimelate into pimeloyl-CoA with concomitant hydrolysis of ATP to AMP. This chain is 6-carboxyhexanoate--CoA ligase, found in Persephonella marina (strain DSM 14350 / EX-H1).